A 296-amino-acid chain; its full sequence is MANELPEIANPTRTRAIMETYGLTFKKSLGQNFLTDINILKNIVAAAEVSEEDNVIEIGPGIGALTEQLAKRANKVMALEIDDRLLPVLADTLSPYENVEVVHQDILKADLKALIAEHFEPGHKLKLVANLPYYITTPILMHLLDSGIEFETIVVMMQKEVAERLAANPGTKAYGSLSVAVQYEMDSEIAFIVPKTVFVPQPNVDSAIIVLNKKKVKPKEPQDEKHFKKLVKGSFMHRRKSLWNNLQSLYGKDPETKEKMLQALEVADIKQSIRAEKLTVADFINLSDALVKMGIN.

6 residues coordinate S-adenosyl-L-methionine: Asn-32, Leu-34, Gly-59, Glu-80, Asp-105, and Asn-130.

It belongs to the class I-like SAM-binding methyltransferase superfamily. rRNA adenine N(6)-methyltransferase family. RsmA subfamily.

The protein resides in the cytoplasm. The enzyme catalyses adenosine(1518)/adenosine(1519) in 16S rRNA + 4 S-adenosyl-L-methionine = N(6)-dimethyladenosine(1518)/N(6)-dimethyladenosine(1519) in 16S rRNA + 4 S-adenosyl-L-homocysteine + 4 H(+). Functionally, specifically dimethylates two adjacent adenosines (A1518 and A1519) in the loop of a conserved hairpin near the 3'-end of 16S rRNA in the 30S particle. May play a critical role in biogenesis of 30S subunits. This chain is Ribosomal RNA small subunit methyltransferase A, found in Ligilactobacillus salivarius (strain UCC118) (Lactobacillus salivarius).